The following is a 358-amino-acid chain: Dual-specificity RNA methyltransferase RlmN (358 aa).

The active-site Proton acceptor is Glu-91. One can recognise a Radical SAM core domain in the interval 102-337 (GNIRITQCLS…TILRKSKGQD (236 aa)). Cys-109 and Cys-342 are joined by a disulfide. 3 residues coordinate [4Fe-4S] cluster: Cys-116, Cys-120, and Cys-123. S-adenosyl-L-methionine-binding positions include 169–170 (GE), Ser-201, 223–225 (SLH), and Asn-299. Residue Cys-342 is the S-methylcysteine intermediate of the active site.

The protein belongs to the radical SAM superfamily. RlmN family. Requires [4Fe-4S] cluster as cofactor.

The protein resides in the cytoplasm. The enzyme catalyses adenosine(2503) in 23S rRNA + 2 reduced [2Fe-2S]-[ferredoxin] + 2 S-adenosyl-L-methionine = 2-methyladenosine(2503) in 23S rRNA + 5'-deoxyadenosine + L-methionine + 2 oxidized [2Fe-2S]-[ferredoxin] + S-adenosyl-L-homocysteine. It catalyses the reaction adenosine(37) in tRNA + 2 reduced [2Fe-2S]-[ferredoxin] + 2 S-adenosyl-L-methionine = 2-methyladenosine(37) in tRNA + 5'-deoxyadenosine + L-methionine + 2 oxidized [2Fe-2S]-[ferredoxin] + S-adenosyl-L-homocysteine. In terms of biological role, specifically methylates position 2 of adenine 2503 in 23S rRNA and position 2 of adenine 37 in tRNAs. m2A2503 modification seems to play a crucial role in the proofreading step occurring at the peptidyl transferase center and thus would serve to optimize ribosomal fidelity. The sequence is that of Dual-specificity RNA methyltransferase RlmN from Lawsonia intracellularis (strain PHE/MN1-00).